The primary structure comprises 1227 residues: Pesticidal crystal protein Cry1Be (1227 aa).

The protein belongs to the delta endotoxin family.

In terms of biological role, promotes colloidosmotic lysis by binding to the midgut epithelial cells of many lepidopteran larvae. This chain is Pesticidal crystal protein Cry1Be (cry1Be), found in Bacillus thuringiensis.